The sequence spans 426 residues: Serine hydroxymethyltransferase (426 aa).

Residues L113 and 117–119 (GHL) each bind (6S)-5,6,7,8-tetrahydrofolate. Position 222 is an N6-(pyridoxal phosphate)lysine (K222). 363–365 (SAF) provides a ligand contact to (6S)-5,6,7,8-tetrahydrofolate.

It belongs to the SHMT family. In terms of assembly, homodimer. It depends on pyridoxal 5'-phosphate as a cofactor.

The protein resides in the cytoplasm. It carries out the reaction (6R)-5,10-methylene-5,6,7,8-tetrahydrofolate + glycine + H2O = (6S)-5,6,7,8-tetrahydrofolate + L-serine. It functions in the pathway one-carbon metabolism; tetrahydrofolate interconversion. It participates in amino-acid biosynthesis; glycine biosynthesis; glycine from L-serine: step 1/1. Its function is as follows. Catalyzes the reversible interconversion of serine and glycine with tetrahydrofolate (THF) serving as the one-carbon carrier. This reaction serves as the major source of one-carbon groups required for the biosynthesis of purines, thymidylate, methionine, and other important biomolecules. Also exhibits THF-independent aldolase activity toward beta-hydroxyamino acids, producing glycine and aldehydes, via a retro-aldol mechanism. This is Serine hydroxymethyltransferase from Bacteroides thetaiotaomicron (strain ATCC 29148 / DSM 2079 / JCM 5827 / CCUG 10774 / NCTC 10582 / VPI-5482 / E50).